The following is a 321-amino-acid chain: TAVTDIVPDVVVAKDGSGNFTTVGAAVAAAKDSSTARFVIYIKEGAYFEYVDVDKKKTNLMFIGDGIGKTWIKGNRSVVDGWTTFRSSTVAVVGTGFIARGISFENYAGPSKHQAVALRSGADFSAFYQCSFVGYQDTLYVHSLRQFYSECDVYGTIDFIFGNAAAVLQKCNLYARKPNENQKNIFTAQGRDDPNQNTGISILNCKVAAAADLIPVLSSFKTYLGRPWKEYSRTVFLLSQMESLIDPAGWLEWSGDFALTTLYYREYKNTGPGSNTTARVTWPGYAVTTNETEVIQFTVGNFIQGSQWLTSYNIPVYLNLT.

An N-acetylthreonine modification is found at Thr-1. Residue Asn-75 is glycosylated (N-linked (GlcNAc...) (complex) asparagine). The substrate site is built by Thr-84 and Gln-114. The active-site Proton donor is Asp-137. A disulfide bridge connects residues Cys-151 and Cys-171. The active-site Nucleophile is Asp-158. Substrate-binding residues include Arg-226 and Trp-228. Residues Asn-275, Asn-290, and Asn-319 are each glycosylated (N-linked (GlcNAc...) (complex) asparagine).

It belongs to the pectinesterase family. The N-glycans attached at Asn-75, Asn-275, Asn-290 and Asn-319 are complex oligosaccharides containing xylose, fucose, hexose and N-acetylglucosamine.

The catalysed reaction is [(1-&gt;4)-alpha-D-galacturonosyl methyl ester](n) + n H2O = [(1-&gt;4)-alpha-D-galacturonosyl](n) + n methanol + n H(+). The protein operates within glycan metabolism; pectin degradation; 2-dehydro-3-deoxy-D-gluconate from pectin: step 1/5. Inhibited by PMEI. The sequence is that of Pectinesterase from Actinidia deliciosa (Kiwi).